The chain runs to 345 residues: Selenide, water dikinase (345 aa).

C16 is a catalytic residue. ATP contacts are provided by residues K19 and 46–48; that span reads TSD. Mg(2+) is bound at residue D49. Residues D66, D89, and 136 to 138 each bind ATP; that span reads GHT. Mg(2+) is bound at residue D89. Mg(2+) is bound at residue D224.

The protein belongs to the selenophosphate synthase 1 family. Class I subfamily. Homodimer. Requires Mg(2+) as cofactor.

It carries out the reaction hydrogenselenide + ATP + H2O = selenophosphate + AMP + phosphate + 2 H(+). Its function is as follows. Synthesizes selenophosphate from selenide and ATP. This Clostridium botulinum (strain Eklund 17B / Type B) protein is Selenide, water dikinase.